Reading from the N-terminus, the 466-residue chain is Ribosome biogenesis protein YTM1 (466 aa).

The tract at residues 11–99 is ubiquitin-like (UBL) domain; that stretch reads IKIKFFTNEE…EAFLTLEYTR (89 aa). The tract at residues 109-466 is sufficient for interaction with ERB1 and association with 66S pre-ribosomes; it reads SFNNDDWISS…QINKGSDIAK (358 aa). WD repeat units lie at residues 124 to 163, 165 to 203, 219 to 258, 296 to 336, 338 to 377, 384 to 424, and 431 to 466; these read PTTK…EKQY, GHSA…IIDE, GHKA…MTSI, GHSE…CVDT, TTGY…TSDQ, GHTN…SLYT, and STNA…DIAK.

Belongs to the WD repeat WDR12/YTM1 family. In terms of assembly, component of the NOP7 complex, composed of ERB1, NOP7 and YTM1. The complex is held together by ERB1, which interacts with NOP7 via its N-terminal domain and with YTM1 via a high-affinity interaction between the seven-bladed beta-propeller domains of the 2 proteins. The NOP7 complex associates with the 66S pre-ribosome. Interacts (via UBL domain) with MDN1 (via VWFA/MIDAS domain).

It is found in the nucleus. It localises to the nucleolus. Its subcellular location is the nucleoplasm. In terms of biological role, component of the NOP7 complex, which is required for maturation of the 25S and 5.8S ribosomal RNAs and formation of the 60S ribosome. The chain is Ribosome biogenesis protein YTM1 from Candida albicans (strain SC5314 / ATCC MYA-2876) (Yeast).